A 232-amino-acid chain; its full sequence is N-acetyltransferase 8B (232 aa).

At 1 to 62 (MPRFEAQKSS…FLLLLGVPLA (62 aa)) the chain is on the cytoplasmic side. A helical; Signal-anchor for type II membrane protein transmembrane segment spans residues 63-83 (LVLVSGSWILAVICIFFLLLL). In terms of domain architecture, N-acetyltransferase spans 79–224 (FLLLLLRLLA…WRLVDICFIQ (146 aa)). At 84–232 (LRLLARQPWK…IQLNYSFPSA (149 aa)) the chain is on the lumenal side. K109 bears the N6-acetyllysine mark.

Belongs to the NAT8 family. In terms of processing, acetylation on Lys-109 modulates enzymatic activity. In terms of tissue distribution, expressed in brain (at protein level).

The protein localises to the endoplasmic reticulum-Golgi intermediate compartment membrane. Its subcellular location is the endoplasmic reticulum membrane. It carries out the reaction L-lysyl-[protein] + acetyl-CoA = N(6)-acetyl-L-lysyl-[protein] + CoA + H(+). In terms of biological role, endoplasmic reticulum (ER)-membrane-bound lysine N-acetyltransferase catalyzing the N6-acetylation of lysine residues in the lumen of the ER in various proteins, including PROM1 and BACE1, using acetyl-CoA as acetyl donor. Thereby, may regulate apoptosis through the acetylation and the regulation of the expression of PROM1. Acetylates and stabilizes BACE1 immature protein, leading to increased steady-state levels in neurons. By acting on BACE1 expression, may regulate amyloid beta-peptide formation. N(6)-lysine acetylation in ER maintains protein homeostasis and regulates reticulophagy. In Mus musculus (Mouse), this protein is N-acetyltransferase 8B.